A 116-amino-acid polypeptide reads, in one-letter code: Large ribosomal subunit protein uL22c (116 aa).

The protein belongs to the universal ribosomal protein uL22 family. Part of the 50S ribosomal subunit.

It is found in the plastid. Its subcellular location is the chloroplast. This protein binds specifically to 23S rRNA. Functionally, the globular domain of the protein is located near the polypeptide exit tunnel on the outside of the subunit, while an extended beta-hairpin is found that lines the wall of the exit tunnel in the center of the 70S ribosome. This chain is Large ribosomal subunit protein uL22c (rpl22), found in Porphyra purpurea (Red seaweed).